Here is an 889-residue protein sequence, read N- to C-terminus: Disease resistance protein UNI (889 aa).

Residues 19 to 64 adopt a coiled-coil conformation; sequence NCLIGKSYIRTLEKNLRALQREMEDLRAIQHEVQNKVARDEARHQR. A disordered region spans residues 131-152; sequence GNFDEVSQPPPRSEVEERPTQP. Residues 137 to 440 form the NB-ARC domain; it reads SQPPPRSEVE…CEGFIGEDQV (304 aa). An ATP-binding site is contributed by 179 to 186; it reads GMGGVGKT. LRR repeat units follow at residues 510–532, 533–555, 557–580, 581–603, 604–625, 626–652, 653–676, 698–721, and 825–848; these read WGAVRKMSLMDNDIEEITCESKC, SELTTLFLQSNKLKNLPGAFIRY, QKLVVLDLSYNRDFNKLPEQISGL, VSLQFLDLSNTSIEHMPIGLKEL, KKLTFLDLTYTDRLCSISGISR, LLSLRLLRLLGSKVHGDASVLKELQQL, QNLQELAITVSAELISLDQRLAKL, MENLSSLRVENSYFSEIKCRESET, and CPKLRKLPLNATSVSKVEEFEIHM.

Belongs to the disease resistance NB-LRR family. As to quaternary structure, interacts with RPT2A.

In terms of biological role, involved in disease resistance via the salicylic acid (SA) signaling pathway. Involved in shoot architecture development via the cytokinin signaling pathway. This chain is Disease resistance protein UNI, found in Arabidopsis thaliana (Mouse-ear cress).